Here is a 275-residue protein sequence, read N- to C-terminus: NADPH-dependent 7-cyano-7-deazaguanine reductase (275 aa).

Residue 81 to 83 (IES) participates in substrate binding. 83–84 (SK) contributes to the NADPH binding site. The active-site Thioimide intermediate is Cys-181. Catalysis depends on Asp-188, which acts as the Proton donor. 220-221 (HE) is a substrate binding site. Position 249-250 (249-250 (RG)) interacts with NADPH.

The protein belongs to the GTP cyclohydrolase I family. QueF type 2 subfamily. In terms of assembly, homodimer.

The protein localises to the cytoplasm. The enzyme catalyses 7-aminomethyl-7-carbaguanine + 2 NADP(+) = 7-cyano-7-deazaguanine + 2 NADPH + 3 H(+). It participates in tRNA modification; tRNA-queuosine biosynthesis. In terms of biological role, catalyzes the NADPH-dependent reduction of 7-cyano-7-deazaguanine (preQ0) to 7-aminomethyl-7-deazaguanine (preQ1). The chain is NADPH-dependent 7-cyano-7-deazaguanine reductase from Xylella fastidiosa (strain M12).